A 688-amino-acid chain; its full sequence is Polyribonucleotide nucleotidyltransferase (688 aa).

Mg(2+)-binding residues include aspartate 484 and aspartate 490. Residues proline 550–isoleucine 609 form the KH domain. Residues aspartate 626–alanine 688 enclose the S1 motif domain.

This sequence belongs to the polyribonucleotide nucleotidyltransferase family. Requires Mg(2+) as cofactor.

The protein localises to the cytoplasm. It carries out the reaction RNA(n+1) + phosphate = RNA(n) + a ribonucleoside 5'-diphosphate. Its function is as follows. Involved in mRNA degradation. Catalyzes the phosphorolysis of single-stranded polyribonucleotides processively in the 3'- to 5'-direction. In Helicobacter pylori (strain P12), this protein is Polyribonucleotide nucleotidyltransferase.